The sequence spans 180 residues: ATP-dependent protease subunit HslV (180 aa).

Residue T8 is part of the active site. A165, C168, and T171 together coordinate Na(+).

It belongs to the peptidase T1B family. HslV subfamily. As to quaternary structure, a double ring-shaped homohexamer of HslV is capped on each side by a ring-shaped HslU homohexamer. The assembly of the HslU/HslV complex is dependent on binding of ATP.

The protein resides in the cytoplasm. It carries out the reaction ATP-dependent cleavage of peptide bonds with broad specificity.. Allosterically activated by HslU binding. Protease subunit of a proteasome-like degradation complex believed to be a general protein degrading machinery. The chain is ATP-dependent protease subunit HslV from Staphylococcus epidermidis (strain ATCC 12228 / FDA PCI 1200).